Consider the following 379-residue polypeptide: Homoserine O-succinyltransferase (379 aa).

The AB hydrolase-1 domain maps to asparagine 51–leucine 360. The Nucleophile role is filled by serine 157. Substrate is bound at residue arginine 227. Residues aspartate 323 and histidine 356 contribute to the active site. Position 357 (aspartate 357) interacts with substrate.

It belongs to the AB hydrolase superfamily. MetX family. Homodimer.

It localises to the cytoplasm. It catalyses the reaction L-homoserine + succinyl-CoA = O-succinyl-L-homoserine + CoA. The protein operates within amino-acid biosynthesis; L-methionine biosynthesis via de novo pathway; O-succinyl-L-homoserine from L-homoserine: step 1/1. Transfers a succinyl group from succinyl-CoA to L-homoserine, forming succinyl-L-homoserine. In Pseudomonas putida (strain GB-1), this protein is Homoserine O-succinyltransferase.